A 254-amino-acid chain; its full sequence is Triosephosphate isomerase (254 aa).

12–14 (NWK) contributes to the substrate binding site. Histidine 99 (electrophile) is an active-site residue. The Proton acceptor role is filled by glutamate 169. Substrate contacts are provided by residues glycine 175, serine 214, and 235 to 236 (GG).

Belongs to the triosephosphate isomerase family. Homodimer.

Its subcellular location is the cytoplasm. The catalysed reaction is D-glyceraldehyde 3-phosphate = dihydroxyacetone phosphate. It participates in carbohydrate biosynthesis; gluconeogenesis. It functions in the pathway carbohydrate degradation; glycolysis; D-glyceraldehyde 3-phosphate from glycerone phosphate: step 1/1. Its function is as follows. Involved in the gluconeogenesis. Catalyzes stereospecifically the conversion of dihydroxyacetone phosphate (DHAP) to D-glyceraldehyde-3-phosphate (G3P). The chain is Triosephosphate isomerase from Chelativorans sp. (strain BNC1).